The following is a 168-amino-acid chain: Gremlin-2 (168 aa).

The signal sequence occupies residues 1-21 (MFWKLSLSLFLVAVLVKVAEA). A glycan (N-linked (GlcNAc...) asparagine) is linked at asparagine 40. Intrachain disulfides connect cysteine 73-cysteine 123, cysteine 87-cysteine 137, cysteine 97-cysteine 155, and cysteine 101-cysteine 157. The 91-residue stretch at 73-163 (CKTQPLRQTV…QCRCMSVNLS (91 aa)) folds into the CTCK domain. Asparagine 161 is a glycosylation site (N-linked (GlcNAc...) asparagine).

It belongs to the DAN family. Homodimer. Interacts with BMP2, BMP4 and BMP7, but has lower affinity for BMP7 than for BMP2 and BMP4. Binds heparin; this impairs the interaction with BMP2. N-glycosylated.

It is found in the secreted. Functionally, cytokine that inhibits the activity of BMP2 and BMP4 in a dose-dependent manner, and thereby modulates signaling by BMP family members. Contributes to the regulation of embryonic morphogenesis via BMP family members. Antagonizes BMP4-induced suppression of progesterone production in granulosa cells. The protein is Gremlin-2 (GREM2) of Homo sapiens (Human).